A 102-amino-acid polypeptide reads, in one-letter code: Acid shock protein (102 aa).

The first 21 residues, 1–21, serve as a signal peptide directing secretion; the sequence is MKKVLALVVAAAMGLSSAAFA. Low complexity predominate over residues 22 to 41; that stretch reads AETATTPAPTATTTKAAPAK. Residues 22-58 constitute a propeptide that is removed on maturation; it reads AETATTPAPTATTTKAAPAKTTHHKKQHKAAPAQKAQ. Residues 22-102 form a disordered region; it reads AETATTPAPT…PAKPAAQPAA (81 aa). A compositionally biased stretch (basic residues) spans 80-90; the sequence is AAKKHAKKHSH. Residues 91 to 102 are compositionally biased toward low complexity; that stretch reads QQPAKPAAQPAA.

This sequence belongs to the Asr family. In terms of processing, proteolytic processing gives rise to the active protein.

It is found in the periplasm. Required for growth and/or survival at acidic conditions. This chain is Acid shock protein, found in Escherichia coli O17:K52:H18 (strain UMN026 / ExPEC).